We begin with the raw amino-acid sequence, 360 residues long: Bifunctional protein FolD 4, chloroplastic (360 aa).

Residues 1-51 (MASMMFTDCSSTTTSRLIHLNRSSGTFLLRQCVGQLRLQTTASGRGCCIRS) constitute a chloroplast transit peptide. Serine 52 carries the N-acetylserine modification.

It belongs to the tetrahydrofolate dehydrogenase/cyclohydrolase family. Homodimer.

Its subcellular location is the plastid. It is found in the chloroplast. It carries out the reaction (6R)-5,10-methylene-5,6,7,8-tetrahydrofolate + NADP(+) = (6R)-5,10-methenyltetrahydrofolate + NADPH. The enzyme catalyses (6R)-5,10-methenyltetrahydrofolate + H2O = (6R)-10-formyltetrahydrofolate + H(+). It participates in one-carbon metabolism; tetrahydrofolate interconversion. Its function is as follows. Catalyzes the oxidation of 5,10-methylenetetrahydrofolate to 5,10-methenyltetrahydrofolate and then the hydrolysis of 5,10-methenyltetrahydrofolate to 10-formyltetrahydrofolate. This is Bifunctional protein FolD 4, chloroplastic (FOLD4) from Arabidopsis thaliana (Mouse-ear cress).